A 116-amino-acid polypeptide reads, in one-letter code: Vesicle-associated membrane protein 5 (116 aa).

At 1–72 (MAGIELERCQ…CWENIRYRIC (72 aa)) the chain is on the cytoplasmic side. In terms of domain architecture, v-SNARE coiled-coil homology spans 5-65 (ELERCQQQAN…QNLAQKKCWE (61 aa)). Phosphoserine is present on residues S41, S48, and S49. The helical; Anchor for type IV membrane protein transmembrane segment at 73–93 (VGLVVVGVLLIILIVLLVVFL) threads the bilayer. Residues 94 to 116 (PQSSDSSSAPRTQDAGIASGPGN) lie on the Vesicular side of the membrane. The tract at residues 96–116 (SSDSSSAPRTQDAGIASGPGN) is disordered.

This sequence belongs to the synaptobrevin family. (Microbial infection) Targeted and hydrolyzed by C.botulinum neurotoxin type X (BoNT/X) which hydrolyzes the 40-Arg-|-Ser-41 bond and probably inhibits neurotransmitter release. It remains unknown whether BoNT/X is ever produced, or what organisms it targets.

Its subcellular location is the cell membrane. The protein resides in the endomembrane system. It is found in the golgi apparatus. The protein localises to the trans-Golgi network membrane. May participate in trafficking events that are associated with myogenesis, such as myoblast fusion and/or GLUT4 trafficking. The protein is Vesicle-associated membrane protein 5 (VAMP5) of Homo sapiens (Human).